The primary structure comprises 498 residues: UDP-N-acetylmuramate--L-alanine ligase (498 aa).

122–128 (GTHGKTS) serves as a coordination point for ATP.

It belongs to the MurCDEF family.

It is found in the cytoplasm. The enzyme catalyses UDP-N-acetyl-alpha-D-muramate + L-alanine + ATP = UDP-N-acetyl-alpha-D-muramoyl-L-alanine + ADP + phosphate + H(+). It participates in cell wall biogenesis; peptidoglycan biosynthesis. Its function is as follows. Cell wall formation. The protein is UDP-N-acetylmuramate--L-alanine ligase of Corynebacterium jeikeium (strain K411).